The chain runs to 527 residues: MLSKTFLLSSAVLWARVANAAFGITDNGSSYTIDANSPNPLKFTVNKSSCDITSIVYYGSEFQYSGKGSHIGSGLGSATVSATQSGDYIKVTCDTSSLTHYFVVHNGDPIIHMATYITAEPDIGELRFIARLNSNLLPNEEPFGDVSTTSGGSAIEGSDVFLVNGETRSKFYSSERFIDDHRHCISGSAHRVCMILNQYESSSGGPFFRDINSNNGGDYNALYWYMNSGHVQTESFRTGLHGPYSMYFSRSGTPSTNIDTSFFASLGIKGYVAANGRGTVTGKASGADSSMDWVVHWYNNDAQYWTYTASDGSFTSPAMKPGTYTMKYYQGEFPVAETTVTVSAGSSTTKNISGSVKTGTTIFKIGEWDGQPTGFRNADKQLRMHPSDSRMDSWSSTYTVGSSSLSDFPMAVFKSVNNPVTIKFTATSAQTGAATLRIGTTLSFAGGRPQATINSYTGPAPSAPTNLNSRGVTRGAYRGLGEVYDVSVPAGTIVTGENTITISVISGSSGDAFLSPNVVFDCIELFQ.

An N-terminal signal peptide occupies residues M1 to A20. N-linked (GlcNAc...) asparagine glycosylation is found at N27 and N46. Disulfide bonds link C50/C93 and C184/C193. N351 carries N-linked (GlcNAc...) asparagine glycosylation.

It belongs to the polysaccharide lyase 4 family.

It is found in the secreted. The enzyme catalyses Endotype eliminative cleavage of L-alpha-rhamnopyranosyl-(1-&gt;4)-alpha-D-galactopyranosyluronic acid bonds of rhamnogalacturonan I domains in ramified hairy regions of pectin leaving L-rhamnopyranose at the reducing end and 4-deoxy-4,5-unsaturated D-galactopyranosyluronic acid at the non-reducing end.. In terms of biological role, pectinolytic enzymes consist of four classes of enzymes: pectin lyase, polygalacturonase, pectin methylesterase and rhamnogalacturonase. Degrades the rhamnogalacturonan I (RG-I) backbone of pectin. Active against linseed rhamnogalacturonan. The chain is Rhamnogalacturonate lyase A (rglA) from Emericella nidulans (strain FGSC A4 / ATCC 38163 / CBS 112.46 / NRRL 194 / M139) (Aspergillus nidulans).